A 132-amino-acid chain; its full sequence is Large ribosomal subunit protein uL14 (132 aa).

It belongs to the universal ribosomal protein uL14 family. In terms of assembly, part of the 50S ribosomal subunit. Forms a cluster with proteins L3 and L24e, part of which may contact the 16S rRNA in 2 intersubunit bridges.

Its function is as follows. Binds to 23S rRNA. Forms part of two intersubunit bridges in the 70S ribosome. The sequence is that of Large ribosomal subunit protein uL14 from Thermoplasma volcanium (strain ATCC 51530 / DSM 4299 / JCM 9571 / NBRC 15438 / GSS1).